A 127-amino-acid chain; its full sequence is Modulator protein MzrA (127 aa).

The Cytoplasmic segment spans residues 1-10 (MGLQNMTLRR). Residues 11–31 (FTLSMSALLLLCALLWLWAAL) form a helical membrane-spanning segment. Residues 32–127 (EQQESSLAIR…RLRDAPHRLG (96 aa)) lie on the Periplasmic side of the membrane.

This sequence belongs to the MzrA family. As to quaternary structure, interacts with EnvZ.

It localises to the cell inner membrane. In terms of biological role, modulates the activity of the EnvZ/OmpR two-component regulatory system, probably by directly modulating EnvZ enzymatic activity and increasing stability of phosphorylated OmpR. This is Modulator protein MzrA from Enterobacter lignolyticus (strain SCF1).